We begin with the raw amino-acid sequence, 728 residues long: 1,4-alpha-glucan branching enzyme GlgB (728 aa).

Residue D405 is the Nucleophile of the active site. E458 (proton donor) is an active-site residue.

The protein belongs to the glycosyl hydrolase 13 family. GlgB subfamily. Monomer.

It carries out the reaction Transfers a segment of a (1-&gt;4)-alpha-D-glucan chain to a primary hydroxy group in a similar glucan chain.. It functions in the pathway glycan biosynthesis; glycogen biosynthesis. Its function is as follows. Catalyzes the formation of the alpha-1,6-glucosidic linkages in glycogen by scission of a 1,4-alpha-linked oligosaccharide from growing alpha-1,4-glucan chains and the subsequent attachment of the oligosaccharide to the alpha-1,6 position. The chain is 1,4-alpha-glucan branching enzyme GlgB from Escherichia coli O6:H1 (strain CFT073 / ATCC 700928 / UPEC).